The chain runs to 196 residues: Probable thymidylate kinase (196 aa).

Residue 9–16 (GIDGSGKT) participates in ATP binding.

The protein belongs to the thymidylate kinase family.

It catalyses the reaction dTMP + ATP = dTDP + ADP. This Methanococcus aeolicus (strain ATCC BAA-1280 / DSM 17508 / OCM 812 / Nankai-3) protein is Probable thymidylate kinase.